Reading from the N-terminus, the 349-residue chain is Secretory carrier-associated membrane protein 3 (349 aa).

Residues 1–90 are disordered; that stretch reads MAQSRDTGNP…EPRNYGSYST (90 aa). At 1–168 the chain is on the cytoplasmic side; it reads MAQSRDTGNP…PQEFQKTVST (168 aa). Ser-32 is modified (phosphoserine). Thr-37 is modified (phosphothreonine). A phosphotyrosine mark is found at Tyr-41 and Tyr-53. The span at 49–68 shows a compositional bias: pro residues; the sequence is PPPAYEPPAPAPAPLPPPSA. Phosphoserine occurs at positions 74 and 78. Residue Tyr-85 is modified to Phosphotyrosine. At Ser-87 the chain carries Phosphoserine. 4 helical membrane-spanning segments follow: residues 169 to 189, 200 to 220, 236 to 256, and 277 to 297; these read MYYL…ACLA, GFGL…VCWY, FVFF…AIGI, and VAVL…LGIV. Residues 298–349 lie on the Cytoplasmic side of the membrane; sequence MLKRIHSLYRQTGASFQKAQQEFAAGVFSNPAVRTAAANAAAGAAENAFRAP. Lys-315 is covalently cross-linked (Glycyl lysine isopeptide (Lys-Gly) (interchain with G-Cter in SUMO1)).

This sequence belongs to the SCAMP family. Interacts with NEDD4 and NEDD4L and TSG101. Interacts with RNF126. In terms of processing, monoubiquitinated.

The protein localises to the membrane. Functions in post-Golgi recycling pathways. Acts as a recycling carrier to the cell surface. The protein is Secretory carrier-associated membrane protein 3 (Scamp3) of Mus musculus (Mouse).